Consider the following 730-residue polypeptide: Dual function macrocyclase-peptidase POPB (730 aa).

Residues S577, D661, and H698 each act as charge relay system in the active site.

Belongs to the peptidase S9A family. As to quaternary structure, monomer. As to expression, expressed in the pileus (cap) and lamellae where it colocalizes with amanitin.

The catalysed reaction is Hydrolysis of Pro-|-Xaa &gt;&gt; Ala-|-Xaa in oligopeptides.. In terms of biological role, dual function macrocyclase-peptidase involved in the biosynthesis of the highly toxic amanitin toxin family of macrocycles. Cleaves peptide bonds on the C-terminal side of prolyl residues. The enzyme first removes 10 residues from the N-terminus of a 35-residue substrate. Conformational trapping of the 25 amino-acid peptide forces the enzyme to release this intermediate rather than proceed to macrocyclization. The enzyme rebinds the 25 amino-acid peptide in a different conformation and catalyzes macrocyclization of the N-terminal eight residues. The chain is Dual function macrocyclase-peptidase POPB from Amanita bisporigera (Destroying angel).